The primary structure comprises 402 residues: Non-homologous end joining protein Ku (402 aa).

The Ku domain maps to 12–185; sequence ISFGLVTIPV…VAALTGIAQP (174 aa). Residues 261–402 form a disordered region; that stretch reads QRAAGGATGG…GPDETAPGGP (142 aa). Low complexity-rich tracts occupy residues 299 to 308 and 332 to 343; these read GDPAASVPGV and VPGVPATAVPGT. Pro residues predominate over residues 344-358; it reads PGAPVPTAPGVPSAP. The segment covering 359-376 has biased composition (low complexity); the sequence is APGTSPTSVPGVQTAPNG.

Belongs to the prokaryotic Ku family. In terms of assembly, homodimer. Interacts with LigD.

Functionally, with LigD forms a non-homologous end joining (NHEJ) DNA repair enzyme, which repairs dsDNA breaks with reduced fidelity. Binds linear dsDNA with 5'- and 3'- overhangs but not closed circular dsDNA nor ssDNA. Recruits and stimulates the ligase activity of LigD. The polypeptide is Non-homologous end joining protein Ku (Symbiobacterium thermophilum (strain DSM 24528 / JCM 14929 / IAM 14863 / T)).